A 283-amino-acid polypeptide reads, in one-letter code: Nopaline-binding periplasmic protein (283 aa).

The N-terminal stretch at 1–25 is a signal peptide; that stretch reads MKFFNLNALAAVVTGVLLAAGPTQA. The cysteines at positions 63 and 70 are disulfide-linked.

This sequence belongs to the bacterial solute-binding protein 3 family.

It is found in the periplasm. Functionally, component of the nopaline active transport system probably consisting of four subunits: Q, M, P and T. This system is also capable of transporting octopine provided that catabolic functions are induced with nopaline. The protein is Nopaline-binding periplasmic protein (nocT) of Agrobacterium fabrum (strain C58 / ATCC 33970) (Agrobacterium tumefaciens (strain C58)).